The sequence spans 518 residues: E3 ubiquitin-protein ligase TRIM39 (518 aa).

The RING-type zinc-finger motif lies at 29-70 (CSVCLEYLKEPVIIECGHNFCKACITRWWEDLERDFPCPVCR). The B box-type zinc-finger motif lies at 102–143 (RDESLCPQHHEALSLFCYEDQEAVCLICAISHTHRAHTVVPL). Zn(2+) contacts are provided by C107, H110, C129, and H135. Positions 181–250 (ELKRLVESRR…AHLAAEVEGK (70 aa)) form a coiled coil. Interaction with CDKN1A stretches follow at residues 268 to 337 (KNIP…QLIA) and 389 to 518 (TSGR…TDWE). The region spanning 319 to 514 (SNFPRQYFAL…NAAPLTIRPP (196 aa)) is the B30.2/SPRY domain.

Belongs to the TRIM/RBCC family. As to quaternary structure, interacts with MOAP1. Interacts with CDKN1A. Post-translationally, autoubiquitinated.

It localises to the cytoplasm. The protein resides in the cytosol. The protein localises to the mitochondrion. It is found in the nucleus. The catalysed reaction is S-ubiquitinyl-[E2 ubiquitin-conjugating enzyme]-L-cysteine + [acceptor protein]-L-lysine = [E2 ubiquitin-conjugating enzyme]-L-cysteine + N(6)-ubiquitinyl-[acceptor protein]-L-lysine.. The protein operates within protein modification; protein ubiquitination. Functionally, E3 ubiquitin-protein ligase. May facilitate apoptosis by inhibiting APC/C-Cdh1-mediated poly-ubiquitination and subsequent proteasome-mediated degradation of the pro-apoptotic protein MOAP1. Regulates the G1/S transition of the cell cycle and DNA damage-induced G2 arrest by stabilizing CDKN1A/p21. Positively regulates CDKN1A/p21 stability by competing with DTL for CDKN1A/p21 binding, therefore disrupting DCX(DTL) E3 ubiquitin ligase complex-mediated CDKN1A/p21 ubiquitination and degradation. In Pan troglodytes (Chimpanzee), this protein is E3 ubiquitin-protein ligase TRIM39 (TRIM39).